The primary structure comprises 427 residues: Rhodocoxin reductase (427 aa).

Residue 2–34 (SIVIIGSGQAGFEAAVSLRSHGFSGTITLVGDE) coordinates FAD. 144-172 (SLVVIGAGFIGLEVAAAARKKGLDVTVVE) provides a ligand contact to NAD(+).

It belongs to the FAD-dependent oxidoreductase family. The cofactor is FAD.

Functionally, the degradation of the thiocarbamate herbicide EPTC by cytochrome CYP116 (thcB) requires the participation of a flavoprotein, rhodocoxin reductase, and an iron-sulfur protein, rhodocoxin, to mediate the transfer of electrons from NADH to P450 for oxygen activation. The polypeptide is Rhodocoxin reductase (thcD) (Rhodococcus erythropolis (Arthrobacter picolinophilus)).